The primary structure comprises 248 residues: tRNA pseudouridine synthase A (248 aa).

Residue Asp-54 is the Nucleophile of the active site. Residue Tyr-112 participates in substrate binding.

This sequence belongs to the tRNA pseudouridine synthase TruA family. As to quaternary structure, homodimer.

The catalysed reaction is uridine(38/39/40) in tRNA = pseudouridine(38/39/40) in tRNA. Functionally, formation of pseudouridine at positions 38, 39 and 40 in the anticodon stem and loop of transfer RNAs. The chain is tRNA pseudouridine synthase A from Geobacillus sp. (strain WCH70).